The chain runs to 271 residues: MANFTAADVKRLRELTGAGMLACKNALAESDGDFDKAVEALRIKGAKDVGKRAERATAEGLVAAKDGALIELNCETDFVAKNAEFQKLADDIVAAAVASKAADVDALKAASIGGQTVEEAIGALSAKIGEKLELRRVAIFGGTVETYLHRRAADLPPAVGVLVEYTGAGAEAAHAVALQIAALKARYLSREDVPEDLVASERRIAEETAKEEGKPEQALPKIVEGRLNGFFKDAVLLEQPSVSDSKKSVKALLDDAGVTVTQFVRFEVGQA.

Positions 76 to 79 (TDFV) are involved in Mg(2+) ion dislocation from EF-Tu.

This sequence belongs to the EF-Ts family.

It localises to the cytoplasm. Functionally, associates with the EF-Tu.GDP complex and induces the exchange of GDP to GTP. It remains bound to the aminoacyl-tRNA.EF-Tu.GTP complex up to the GTP hydrolysis stage on the ribosome. The protein is Elongation factor Ts of Mycobacterium ulcerans (strain Agy99).